A 1024-amino-acid chain; its full sequence is Probable alpha-mannosidase At5g13980 (1024 aa).

An N-terminal signal peptide occupies residues 1–21 (MDLAKFLCWIVLLLGISLVES). Asparagine 27 carries an N-linked (GlcNAc...) asparagine glycan. 2 residues coordinate Zn(2+): histidine 46 and aspartate 48. Asparagine 63 carries N-linked (GlcNAc...) asparagine glycosylation. Residue aspartate 168 coordinates Zn(2+). The N-linked (GlcNAc...) asparagine glycan is linked to asparagine 278. Position 410 (histidine 410) interacts with Zn(2+). Cysteines 461 and 469 form a disulfide. N-linked (GlcNAc...) asparagine glycosylation is found at asparagine 465, asparagine 475, asparagine 637, asparagine 658, asparagine 733, and asparagine 823. A disulfide bridge connects residues cysteine 827 and cysteine 832.

The protein belongs to the glycosyl hydrolase 38 family. As to quaternary structure, homodimer. Zn(2+) is required as a cofactor.

It carries out the reaction Hydrolysis of terminal, non-reducing alpha-D-mannose residues in alpha-D-mannosides.. In terms of biological role, liberates mannose from p-nitrophenyl-alpha-D-mannoside in vitro. The sequence is that of Probable alpha-mannosidase At5g13980 from Arabidopsis thaliana (Mouse-ear cress).